The chain runs to 295 residues: Acetylglutamate kinase (295 aa).

Substrate is bound by residues 61 to 62, Arg-83, and Asn-182; that span reads GG.

The protein belongs to the acetylglutamate kinase family. ArgB subfamily.

Its subcellular location is the cytoplasm. The catalysed reaction is N-acetyl-L-glutamate + ATP = N-acetyl-L-glutamyl 5-phosphate + ADP. It participates in amino-acid biosynthesis; L-arginine biosynthesis; N(2)-acetyl-L-ornithine from L-glutamate: step 2/4. In terms of biological role, catalyzes the ATP-dependent phosphorylation of N-acetyl-L-glutamate. The chain is Acetylglutamate kinase from Clostridium acetobutylicum (strain ATCC 824 / DSM 792 / JCM 1419 / IAM 19013 / LMG 5710 / NBRC 13948 / NRRL B-527 / VKM B-1787 / 2291 / W).